Consider the following 225-residue polypeptide: Cardiotrophin-like cytokine factor 1 (225 aa).

The N-terminal stretch at 1–27 (MDLRAGDSWGMLACLCTVLWHLPAVPA) is a signal peptide. Asn-29 is a glycosylation site (N-linked (GlcNAc...) asparagine).

This sequence belongs to the IL-6 superfamily. Forms a heteromeric complex with cardiotrophin-like cytokine CRLF1/CLF-1; the CRLF1-CLCF1 complex is a ligand for the ciliary neurotrophic factor receptor/CNTFR. The CRLF1-CLCF1 heterodimer binds SORL1 (via N-terminal ectodomain); within this complex, the interaction is mediated predominantly by the CRLF1 moiety. The tripartite signaling complex formed by CRLF1, CLCF1 and CNTFR also binds SORL1. As to expression, expressed predominantly in lymph nodes, spleen, peripheral blood lymphocytes, bone marrow, and fetal liver.

Its subcellular location is the secreted. Its function is as follows. In complex with CRLF1, forms a heterodimeric neurotropic cytokine that plays a crucial role during neuronal development. Also stimulates B-cells. Binds to and activates the ILST/gp130 receptor. The protein is Cardiotrophin-like cytokine factor 1 (CLCF1) of Homo sapiens (Human).